The sequence spans 623 residues: V-type proton ATPase catalytic subunit A (623 aa).

ATP is bound at residue 252–259; that stretch reads GAFGCGKT.

It belongs to the ATPase alpha/beta chains family. V-ATPase is a heteromultimeric enzyme composed of a peripheral catalytic V1 complex (components A to H) attached to an integral membrane V0 proton pore complex (components: a, c, c'', d and e). Binds to the deubiquitinating enzyme AMSH3.

The protein localises to the vacuole membrane. It catalyses the reaction ATP + H2O + 4 H(+)(in) = ADP + phosphate + 5 H(+)(out). Its function is as follows. Catalytic subunit of the peripheral V1 complex of vacuolar ATPase. V-ATPase vacuolar ATPase is responsible for acidifying a variety of intracellular compartments in eukaryotic cells. This chain is V-type proton ATPase catalytic subunit A (VHA-A), found in Arabidopsis thaliana (Mouse-ear cress).